The chain runs to 304 residues: Large ribosomal subunit protein uL18 (304 aa).

It belongs to the universal ribosomal protein uL18 family. Component of a hexameric 5S RNP precursor complex, composed of 5S RNA, RRS1, RPF2, RPL5, RPL11 and SYO1; this complex acts as a precursor for ribosome assembly.

The protein resides in the cytoplasm. In terms of biological role, component of the ribosome, a large ribonucleoprotein complex responsible for the synthesis of proteins in the cell. The small ribosomal subunit (SSU) binds messenger RNAs (mRNAs) and translates the encoded message by selecting cognate aminoacyl-transfer RNA (tRNA) molecules. The large subunit (LSU) contains the ribosomal catalytic site termed the peptidyl transferase center (PTC), which catalyzes the formation of peptide bonds, thereby polymerizing the amino acids delivered by tRNAs into a polypeptide chain. The nascent polypeptides leave the ribosome through a tunnel in the LSU and interact with protein factors that function in enzymatic processing, targeting, and the membrane insertion of nascent chains at the exit of the ribosomal tunnel. This chain is Large ribosomal subunit protein uL18, found in Chaetomium thermophilum (strain DSM 1495 / CBS 144.50 / IMI 039719) (Thermochaetoides thermophila).